Consider the following 1178-residue polypeptide: Phytochrome B (1178 aa).

Residues 1–15 are compositionally biased toward polar residues; the sequence is MASGSRATPTRSPSS. Residues 1 to 58 form a disordered region; sequence MASGSRATPTRSPSSARPEAPRHAHHHHHHHSQSSGGSTSRAGGGGGGGGGGGGTAAT. Basic residues predominate over residues 23–32; the sequence is HAHHHHHHHS. Gly residues predominate over residues 42–55; that stretch reads AGGGGGGGGGGGGT. Residues 267–449 enclose the GAF domain; the sequence is DIKLLCDTVV…AFGLQLNMEL (183 aa). Cys-372 lines the phytochromobilin pocket. 2 consecutive PAS domains span residues 668–739 and 802–873; these read VARE…LRGE and DYKA…MVVI. The region spanning 950–1170 is the Histidine kinase domain; it reads YICQEIKNPL…LIVLELPQPR (221 aa).

It belongs to the phytochrome family. As to quaternary structure, homodimer. Post-translationally, contains one covalently linked phytochromobilin chromophore.

Regulatory photoreceptor which exists in two forms that are reversibly interconvertible by light: the Pr form that absorbs maximally in the red region of the spectrum and the Pfr form that absorbs maximally in the far-red region. Photoconversion of Pr to Pfr induces an array of morphogenic responses, whereas reconversion of Pfr to Pr cancels the induction of those responses. Pfr controls the expression of a number of nuclear genes including those encoding the small subunit of ribulose-bisphosphate carboxylase, chlorophyll A/B binding protein, protochlorophyllide reductase, rRNA, etc. It also controls the expression of its own gene(s) in a negative feedback fashion. This chain is Phytochrome B (PHYB), found in Sorghum bicolor (Sorghum).